The primary structure comprises 661 residues: UvrABC system protein B (661 aa).

Residues 25–414 form the Helicase ATP-binding domain; that stretch reads AGLNSKKRSQ…DTVVELIIRP (390 aa). 38–45 is a binding site for ATP; that stretch reads GITGSGKT. Positions 91-114 match the Beta-hairpin motif; sequence YYDYYQPEAYIARTDTFIEKDSSI. Positions 430–592 constitute a Helicase C-terminal domain; it reads QVEDLIGEIQ…IIPKTINRAI (163 aa). Residues 621 to 656 enclose the UVR domain; the sequence is KAHIEKLKKDMLKAASNLEFEQAAKLRDQLKTLEEA.

It belongs to the UvrB family. Forms a heterotetramer with UvrA during the search for lesions. Interacts with UvrC in an incision complex.

Its subcellular location is the cytoplasm. Its function is as follows. The UvrABC repair system catalyzes the recognition and processing of DNA lesions. A damage recognition complex composed of 2 UvrA and 2 UvrB subunits scans DNA for abnormalities. Upon binding of the UvrA(2)B(2) complex to a putative damaged site, the DNA wraps around one UvrB monomer. DNA wrap is dependent on ATP binding by UvrB and probably causes local melting of the DNA helix, facilitating insertion of UvrB beta-hairpin between the DNA strands. Then UvrB probes one DNA strand for the presence of a lesion. If a lesion is found the UvrA subunits dissociate and the UvrB-DNA preincision complex is formed. This complex is subsequently bound by UvrC and the second UvrB is released. If no lesion is found, the DNA wraps around the other UvrB subunit that will check the other stand for damage. The protein is UvrABC system protein B of Rickettsia felis (strain ATCC VR-1525 / URRWXCal2) (Rickettsia azadi).